We begin with the raw amino-acid sequence, 211 residues long: MIGIIDYGRGNLRSVEKALWKLGYPAKVLESPAELMAVKGIILPGVGAFADAMAALEEKGWIQPLIHYAHSGMPFLGICLGMQVLFEVGEEHGEHKGLGLLPGRVVRFPAGRKIPHMGWNTLHQEKPCRLLEGIPDEAYFYFVHSYYVASEEQEILAGMSDYGVPFPALVGRDNVWGAQFHPEKSSPWGLKLLENFGKWVNEDATVSSHRS.

Positions M1 to V206 constitute a Glutamine amidotransferase type-1 domain. Residue C79 is the Nucleophile of the active site. Residues H181 and E183 contribute to the active site.

As to quaternary structure, heterodimer of HisH and HisF.

The protein localises to the cytoplasm. The enzyme catalyses 5-[(5-phospho-1-deoxy-D-ribulos-1-ylimino)methylamino]-1-(5-phospho-beta-D-ribosyl)imidazole-4-carboxamide + L-glutamine = D-erythro-1-(imidazol-4-yl)glycerol 3-phosphate + 5-amino-1-(5-phospho-beta-D-ribosyl)imidazole-4-carboxamide + L-glutamate + H(+). It catalyses the reaction L-glutamine + H2O = L-glutamate + NH4(+). The protein operates within amino-acid biosynthesis; L-histidine biosynthesis; L-histidine from 5-phospho-alpha-D-ribose 1-diphosphate: step 5/9. Functionally, IGPS catalyzes the conversion of PRFAR and glutamine to IGP, AICAR and glutamate. The HisH subunit catalyzes the hydrolysis of glutamine to glutamate and ammonia as part of the synthesis of IGP and AICAR. The resulting ammonia molecule is channeled to the active site of HisF. The sequence is that of Imidazole glycerol phosphate synthase subunit HisH from Desulfitobacterium hafniense (strain Y51).